The following is a 698-amino-acid chain: DNA ligase (698 aa).

Residues 35–39 (DSVYD), 84–85 (SL), and E123 contribute to the NAD(+) site. K125 acts as the N6-AMP-lysine intermediate in catalysis. Positions 146, 183, 302, and 326 each coordinate NAD(+). The Zn(2+) site is built by C420, C423, C438, and C443. The region spanning 612-698 (NGKGHLNGQT…QNSADTIHLL (87 aa)) is the BRCT domain.

Belongs to the NAD-dependent DNA ligase family. LigA subfamily. Mg(2+) serves as cofactor. Mn(2+) is required as a cofactor.

The enzyme catalyses NAD(+) + (deoxyribonucleotide)n-3'-hydroxyl + 5'-phospho-(deoxyribonucleotide)m = (deoxyribonucleotide)n+m + AMP + beta-nicotinamide D-nucleotide.. Its function is as follows. DNA ligase that catalyzes the formation of phosphodiester linkages between 5'-phosphoryl and 3'-hydroxyl groups in double-stranded DNA using NAD as a coenzyme and as the energy source for the reaction. It is essential for DNA replication and repair of damaged DNA. This is DNA ligase from Synechococcus sp. (strain WH7803).